We begin with the raw amino-acid sequence, 955 residues long: Anoctamin-4 (955 aa).

Residues 1-352 (MEASSSGITN…FGEKIGLYFA (352 aa)) lie on the Cytoplasmic side of the membrane. The disordered stretch occupies residues 73–97 (KDDDSLLHPGNLTSTSEDTSRLEAG). Residues 353 to 373 (WLGWYTGMLFPAAFIGLFVFL) traverse the membrane as a helical segment. Topologically, residues 374–424 (YGVTTLDHCQVSKEVCQATDIIMCPVCDKYCPFMRLSDSCVYAKVTHLFDN) are extracellular. Residues 425–445 (GATVFFAVFMAVWATVFLEFW) form a helical membrane-spanning segment. The Cytoplasmic segment spans residues 446–505 (KRRRAVIAYDWDLIDWEEEEEEIRPQFEAKYSKKERMNPISGKPEPYQAFTDKCSRLIVS). Residues 506 to 526 (ASGIFFMICVVIAAVFGIVIY) traverse the membrane as a helical segment. The Extracellular segment spans residues 527–547 (RVVTVSTFAAFKWALIRNNSQ). Asparagine 544 is a glycosylation site (N-linked (GlcNAc...) asparagine). Residues 548-568 (VATTGTAVCINFCIIMLLNVL) traverse the membrane as a helical segment. At 569–595 (YEKVALLLTNLEQPRTESEWENSFTLK) the chain is on the cytoplasmic side. The chain crosses the membrane as a helical span at residues 596–616 (MFLFQFVNLNSSTFYIAFFLG). The Extracellular segment spans residues 617–715 (RFTGHPGAYL…AYGLFDEYLE (99 aa)). A helical transmembrane segment spans residues 716 to 736 (MILQFGFTTIFVAAFPLAPLL). Residues 737 to 768 (ALLNNIIEIRLDAYKFVTQWRRPLASRAKDIG) lie on the Cytoplasmic side of the membrane. The chain crosses the membrane as a helical span at residues 769–789 (IWYGILEGIGILSVITNAFVI). The Extracellular segment spans residues 790–885 (AITSDFIPRL…QFWHVLAARL (96 aa)). N-linked (GlcNAc...) asparagine glycans are attached at residues asparagine 824 and asparagine 837. The chain crosses the membrane as a helical span at residues 886–906 (AFIIVFEHLVFCIKHLISYLI). The Cytoplasmic portion of the chain corresponds to 907 to 955 (PDLPKDLRDRMRREKYLIQEMMYEAELERLQKERKERKKNGKAHHNEWP).

Belongs to the anoctamin family. Predominantly expressed in neuronal tissues. Expressed at low levels in ovary, uterus, heart and brain.

The protein resides in the cell membrane. It catalyses the reaction a 1,2-diacyl-sn-glycero-3-phospho-L-serine(in) = a 1,2-diacyl-sn-glycero-3-phospho-L-serine(out). The enzyme catalyses a beta-D-galactosyl-(1&lt;-&gt;1')-N-acylsphing-4-enine(out) = a beta-D-galactosyl-(1&lt;-&gt;1')-N-acylsphing-4-enine(in). It carries out the reaction a 1,2-diacyl-sn-glycero-3-phosphocholine(in) = a 1,2-diacyl-sn-glycero-3-phosphocholine(out). Functionally, has calcium-dependent phospholipid scramblase activity; scrambles phosphatidylserine, phosphatidylcholine and galactosylceramide. Does not exhibit calcium-activated chloride channel (CaCC) activity. This Mus musculus (Mouse) protein is Anoctamin-4.